A 486-amino-acid chain; its full sequence is Betaine aldehyde dehydrogenase (486 aa).

Residues Thr-23 and Asp-90 each contribute to the K(+) site. 147-149 provides a ligand contact to NAD(+); sequence GAW. The Charge relay system role is filled by Lys-159. NAD(+)-binding positions include 173–176 and 226–229; these read KPSE and ESGT. Leu-241 contacts K(+). Glu-247 serves as the catalytic Proton acceptor. 3 residues coordinate NAD(+): Gly-249, Cys-281, and Glu-382. Catalysis depends on Cys-281, which acts as the Nucleophile. Cysteine sulfenic acid (-SOH) is present on Cys-281. K(+)-binding residues include Lys-452 and Gly-455. The active-site Charge relay system is Glu-459.

The protein belongs to the aldehyde dehydrogenase family. In terms of assembly, dimer of dimers. It depends on K(+) as a cofactor.

It carries out the reaction betaine aldehyde + NAD(+) + H2O = glycine betaine + NADH + 2 H(+). The protein operates within amine and polyamine biosynthesis; betaine biosynthesis via choline pathway; betaine from betaine aldehyde: step 1/1. In terms of biological role, involved in the biosynthesis of the osmoprotectant glycine betaine. Catalyzes the irreversible oxidation of betaine aldehyde to the corresponding acid. The protein is Betaine aldehyde dehydrogenase of Vibrio vulnificus (strain YJ016).